The primary structure comprises 338 residues: Anthranilate phosphoribosyltransferase (338 aa).

5-phospho-alpha-D-ribose 1-diphosphate-binding positions include glycine 82, glycine 85 to aspartate 86, threonine 90, asparagine 92 to threonine 95, lysine 110 to serine 118, and serine 122. Glycine 82 lines the anthranilate pocket. Serine 94 lines the Mg(2+) pocket. Position 113 (asparagine 113) interacts with anthranilate. Arginine 168 lines the anthranilate pocket. Residues aspartate 226 and glutamate 227 each coordinate Mg(2+).

Belongs to the anthranilate phosphoribosyltransferase family. As to quaternary structure, homodimer. The cofactor is Mg(2+).

It catalyses the reaction N-(5-phospho-beta-D-ribosyl)anthranilate + diphosphate = 5-phospho-alpha-D-ribose 1-diphosphate + anthranilate. It participates in amino-acid biosynthesis; L-tryptophan biosynthesis; L-tryptophan from chorismate: step 2/5. Its function is as follows. Catalyzes the transfer of the phosphoribosyl group of 5-phosphorylribose-1-pyrophosphate (PRPP) to anthranilate to yield N-(5'-phosphoribosyl)-anthranilate (PRA). The polypeptide is Anthranilate phosphoribosyltransferase (Deinococcus radiodurans (strain ATCC 13939 / DSM 20539 / JCM 16871 / CCUG 27074 / LMG 4051 / NBRC 15346 / NCIMB 9279 / VKM B-1422 / R1)).